The sequence spans 343 residues: Biotin synthase (343 aa).

Residues 36–254 form the Radical SAM core domain; that stretch reads NTIQISTLLS…IAVARIMMPK (219 aa). Residues C51, C55, and C58 each contribute to the [4Fe-4S] cluster site. Residues C95, C126, C186, and R258 each contribute to the [2Fe-2S] cluster site.

This sequence belongs to the radical SAM superfamily. Biotin synthase family. Homodimer. [4Fe-4S] cluster serves as cofactor. [2Fe-2S] cluster is required as a cofactor.

It catalyses the reaction (4R,5S)-dethiobiotin + (sulfur carrier)-SH + 2 reduced [2Fe-2S]-[ferredoxin] + 2 S-adenosyl-L-methionine = (sulfur carrier)-H + biotin + 2 5'-deoxyadenosine + 2 L-methionine + 2 oxidized [2Fe-2S]-[ferredoxin]. Its pathway is cofactor biosynthesis; biotin biosynthesis; biotin from 7,8-diaminononanoate: step 2/2. Its function is as follows. Catalyzes the conversion of dethiobiotin (DTB) to biotin by the insertion of a sulfur atom into dethiobiotin via a radical-based mechanism. This chain is Biotin synthase, found in Buchnera aphidicola subsp. Acyrthosiphon pisum (strain APS) (Acyrthosiphon pisum symbiotic bacterium).